The primary structure comprises 149 residues: Large ribosomal subunit protein eL19 (149 aa).

Positions 67–90 (KRKLQKRKGRRRGHGSRKGAKGAR) are disordered.

This sequence belongs to the eukaryotic ribosomal protein eL19 family. In terms of assembly, part of the 50S ribosomal subunit.

Its function is as follows. Binds to the 23S rRNA. This is Large ribosomal subunit protein eL19 from Archaeoglobus fulgidus (strain ATCC 49558 / DSM 4304 / JCM 9628 / NBRC 100126 / VC-16).